The sequence spans 150 residues: UPF0178 protein Maqu_2186 (150 aa).

The protein belongs to the UPF0178 family.

This is UPF0178 protein Maqu_2186 from Marinobacter nauticus (strain ATCC 700491 / DSM 11845 / VT8) (Marinobacter aquaeolei).